The primary structure comprises 575 residues: Phosphoenolpyruvate-protein phosphotransferase (575 aa).

His191 acts as the Tele-phosphohistidine intermediate in catalysis. Arg298 and Arg334 together coordinate phosphoenolpyruvate. Glu435 and Asp459 together coordinate Mg(2+). Phosphoenolpyruvate contacts are provided by residues 458-459 (ND) and Arg469. The Proton donor role is filled by Cys506.

The protein belongs to the PEP-utilizing enzyme family. As to quaternary structure, homodimer. Mg(2+) serves as cofactor.

The protein resides in the cytoplasm. The enzyme catalyses L-histidyl-[protein] + phosphoenolpyruvate = N(pros)-phospho-L-histidyl-[protein] + pyruvate. In terms of biological role, general (non sugar-specific) component of the phosphoenolpyruvate-dependent sugar phosphotransferase system (sugar PTS). This major carbohydrate active-transport system catalyzes the phosphorylation of incoming sugar substrates concomitantly with their translocation across the cell membrane. Enzyme I transfers the phosphoryl group from phosphoenolpyruvate (PEP) to the phosphoryl carrier protein (HPr). This chain is Phosphoenolpyruvate-protein phosphotransferase (ptsI), found in Lactococcus lactis subsp. cremoris (Streptococcus cremoris).